We begin with the raw amino-acid sequence, 351 residues long: Fe(3+) ions import ATP-binding protein FbpC (351 aa).

The ABC transporter domain maps to Val-7–Met-237. Position 39 to 46 (Gly-39 to Thr-46) interacts with ATP.

Belongs to the ABC transporter superfamily. Fe(3+) ion importer (TC 3.A.1.10) family. As to quaternary structure, the complex is composed of two ATP-binding proteins (FbpC), two transmembrane proteins (FbpB) and a solute-binding protein (FbpA).

It is found in the cell inner membrane. The enzyme catalyses Fe(3+)(out) + ATP + H2O = Fe(3+)(in) + ADP + phosphate + H(+). Part of the ABC transporter complex FbpABC involved in Fe(3+) ions import. Responsible for energy coupling to the transport system. The chain is Fe(3+) ions import ATP-binding protein FbpC from Photorhabdus laumondii subsp. laumondii (strain DSM 15139 / CIP 105565 / TT01) (Photorhabdus luminescens subsp. laumondii).